Here is a 298-residue protein sequence, read N- to C-terminus: Probable endonuclease 4 (298 aa).

Positions 69, 111, 146, 180, 183, 215, 228, 230, and 260 each coordinate Zn(2+).

The protein belongs to the AP endonuclease 2 family. Zn(2+) serves as cofactor.

It catalyses the reaction Endonucleolytic cleavage to 5'-phosphooligonucleotide end-products.. Functionally, endonuclease IV plays a role in DNA repair. It cleaves phosphodiester bonds at apurinic or apyrimidinic (AP) sites, generating a 3'-hydroxyl group and a 5'-terminal sugar phosphate. In Bacillus mycoides (strain KBAB4) (Bacillus weihenstephanensis), this protein is Probable endonuclease 4.